A 364-amino-acid polypeptide reads, in one-letter code: DNA polymerase IV (364 aa).

The UmuC domain occupies 14–198 (IIHIDMDAFF…LPIEKFHGVG (185 aa)). The Mg(2+) site is built by aspartate 18 and aspartate 116. Glutamate 117 is an active-site residue.

It belongs to the DNA polymerase type-Y family. As to quaternary structure, monomer. Requires Mg(2+) as cofactor.

Its subcellular location is the cytoplasm. The catalysed reaction is DNA(n) + a 2'-deoxyribonucleoside 5'-triphosphate = DNA(n+1) + diphosphate. Its function is as follows. Poorly processive, error-prone DNA polymerase involved in untargeted mutagenesis. Copies undamaged DNA at stalled replication forks, which arise in vivo from mismatched or misaligned primer ends. These misaligned primers can be extended by PolIV. Exhibits no 3'-5' exonuclease (proofreading) activity. May be involved in translesional synthesis, in conjunction with the beta clamp from PolIII. This is DNA polymerase IV from Streptococcus pyogenes serotype M4 (strain MGAS10750).